We begin with the raw amino-acid sequence, 166 residues long: uncharacterized protein (166 aa).

The next 3 membrane-spanning stretches (helical) occupy residues 4 to 24 (LNIF…EASI), 101 to 121 (LITC…SEAI), and 146 to 166 (SWSS…QCFL).

It is found in the membrane. This is an uncharacterized protein from Saccharomyces cerevisiae (strain ATCC 204508 / S288c) (Baker's yeast).